The primary structure comprises 412 residues: MQSWSDTALPTVPGAGPPLRLYDTADRQVRPVAPGATATMYVCGITPYDATHLGHAATYLTFDLVNRVLRDGGHDVHYVQNVTDVDDPLFERAARDGVDWRELGSREIELFRTDMAALRVLPPREYVGAVESVEEVVEFVQKLLANGAAYVVDDPDFPDIYFRTDATEQFGYESGYDRATMERLFAERGGDPDRPGKRDPLDALLWRAARPGEPSWPAPFGAGRPGWHIECSAIALNRLGPEFDIQGGGSDLIYPHHEYSAAHAESVVAGRRFARHYVHAGLIGLDGEKMSKSRGNLVLVSTLRKDGVDPAAIRLGLLDGHYRQDRMWTDAVLEAALARLARWRSATALSAGPAAHDTIARLRQHLADDLDSPKALAAVDNWVTEALDYGGSDSGAPAAIAEAVDALLGVRL.

Position 43 (cysteine 43) interacts with Zn(2+). Residues 43 to 46, threonine 58, and 81 to 83 each bind L-cysteinyl-5'-AMP; these read CGIT and NVT. The 'HIGH' region motif lies at 45–55; the sequence is ITPYDATHLGH. Positions 187-192 match the 'ERGGDP' region motif; sequence ERGGDP. An L-cysteinyl-5'-AMP-binding site is contributed by tryptophan 227. A Zn(2+)-binding site is contributed by cysteine 231. 249 to 251 provides a ligand contact to L-cysteinyl-5'-AMP; sequence GSD. A Zn(2+)-binding site is contributed by histidine 256. Isoleucine 283 provides a ligand contact to L-cysteinyl-5'-AMP. The 'KMSKS' region signature appears at 289-293; sequence KMSKS.

Belongs to the class-I aminoacyl-tRNA synthetase family. MshC subfamily. As to quaternary structure, monomer. Requires Zn(2+) as cofactor.

It carries out the reaction 1D-myo-inositol 2-amino-2-deoxy-alpha-D-glucopyranoside + L-cysteine + ATP = 1D-myo-inositol 2-(L-cysteinylamino)-2-deoxy-alpha-D-glucopyranoside + AMP + diphosphate + H(+). Functionally, catalyzes the ATP-dependent condensation of GlcN-Ins and L-cysteine to form L-Cys-GlcN-Ins. In Nocardia farcinica (strain IFM 10152), this protein is L-cysteine:1D-myo-inositol 2-amino-2-deoxy-alpha-D-glucopyranoside ligase (mshC).